Here is a 265-residue protein sequence, read N- to C-terminus: MKNSKVIKLQDRVPKLKNQQKKKKKNVNHRLILYISILFLLVLFLIYFRSPLSNIKKISVFGNHYMTDEQVMKESGVTYDTSYFRVTAHKAEENLTKRKEIKAVNVKKRFPNKIDVHIEEYLTIGYINKDGKLQPLLENGKTLDVLPNGKLPVAAPIFEPFKEEKMKELIAELEKLTPTILRSISEIRYSPTNANEDHLTLYMNEGYEVSTTIQNFAKRMETYPLILKTIEPGKKVLIDLEVGAYTKELGAEEKKNRMIVFNTLS.

The Cytoplasmic segment spans residues 1–30; that stretch reads MKNSKVIKLQDRVPKLKNQQKKKKKNVNHR. The helical transmembrane segment at 31–51 threads the bilayer; it reads LILYISILFLLVLFLIYFRSP. The Extracellular segment spans residues 52–265; the sequence is LSNIKKISVF…NRMIVFNTLS (214 aa). The 69-residue stretch at 53-121 folds into the POTRA domain; it reads SNIKKISVFG…NKIDVHIEEY (69 aa).

Belongs to the FtsQ/DivIB family. DivIB subfamily.

It localises to the cell membrane. Functionally, cell division protein that may be involved in stabilizing or promoting the assembly of the division complex. The sequence is that of Cell division protein DivIB from Bacillus anthracis.